The following is a 169-amino-acid chain: MAEENQTTPADAAQAAQGPQFAIQRIYTKDISFETPNSPAIFQKEWKPEVQLDLDTRSALIEENVYEIVLAVTVTAMLGEETAFLCEVQQAGIFAIGEMPEQNKAHMLGSFCPNTLFPYARETISNLVNRGTFPPLNLAPVNFDAIFAAYMQKRAAQQAQEQAPTQLDA.

This sequence belongs to the SecB family. In terms of assembly, homotetramer, a dimer of dimers. One homotetramer interacts with 1 SecA dimer.

It localises to the cytoplasm. In terms of biological role, one of the proteins required for the normal export of preproteins out of the cell cytoplasm. It is a molecular chaperone that binds to a subset of precursor proteins, maintaining them in a translocation-competent state. It also specifically binds to its receptor SecA. The chain is Protein-export protein SecB from Pseudoalteromonas atlantica (strain T6c / ATCC BAA-1087).